The sequence spans 428 residues: MGTHVIKMPDIGEGIAEVELVEWHVQVGDSVNEDQVLAEVMTDKATVEIPSPVAGRILALGGQPGQVMAVGGELIRLEVEGAGNLAESPAAATPAAPVAATPEKPKEAPVAAPKAAAEAPRALRDSEAPRQRRQPGERPLASPAVRQRARDLGIELQFVQGSGPAGRVLHEDLDAYLTQDGSVARSGGAAQGYAERHDEQAVPVIGLRRKIAQKMQDAKRRIPHFSYVEEIDVTDLEALRAHLNQKWGGQRGKLTLLPFLVRAMVVALRDFPQLNARYDDEAEVVTRYGAVHVGIATQSDNGLMVPVLRHAESRDLWGNASEVARLAEAARSGKAQRQELSGSTITLSSLGVLGGIVSTPVINHPEVAIVGVNRIVERPMVVGGNIVVRKMMNLSSSFDHRVVDGMDAAAFIQAVRGLLEHPATLFLE.

The Lipoyl-binding domain maps to 3–78; sequence THVIKMPDIG…AVGGELIRLE (76 aa). Lysine 44 carries the N6-lipoyllysine modification. A disordered region spans residues 88–145; the sequence is SPAAATPAAPVAATPEKPKEAPVAAPKAAAEAPRALRDSEAPRQRRQPGERPLASPAV. Low complexity predominate over residues 89-120; that stretch reads PAAATPAAPVAATPEKPKEAPVAAPKAAAEAP. Over residues 121-136 the composition is skewed to basic and acidic residues; that stretch reads RALRDSEAPRQRRQPG. The Peripheral subunit-binding (PSBD) domain occupies 140-177; sequence LASPAVRQRARDLGIELQFVQGSGPAGRVLHEDLDAYL. Active-site residues include histidine 400 and aspartate 404.

It belongs to the 2-oxoacid dehydrogenase family. Forms a 24-polypeptide structural core with octahedral symmetry. The cofactor is (R)-lipoate.

It catalyses the reaction N(6)-[(R)-dihydrolipoyl]-L-lysyl-[protein] + 2-methylpropanoyl-CoA = N(6)-[(R)-S(8)-2-methylpropanoyldihydrolipoyl]-L-lysyl-[protein] + CoA. Functionally, the branched-chain alpha-keto dehydrogenase complex catalyzes the overall conversion of alpha-keto acids to acyl-CoA and CO(2). It contains multiple copies of three enzymatic components: branched-chain alpha-keto acid decarboxylase (E1), lipoamide acyltransferase (E2) and lipoamide dehydrogenase (E3). The polypeptide is Lipoamide acyltransferase component of branched-chain alpha-keto acid dehydrogenase complex (bkdB) (Pseudomonas aeruginosa (strain ATCC 15692 / DSM 22644 / CIP 104116 / JCM 14847 / LMG 12228 / 1C / PRS 101 / PAO1)).